We begin with the raw amino-acid sequence, 660 residues long: Polyadenylation factor subunit 2 (660 aa).

Over residues 1 to 12 (MSYEPRGDHDKG) the composition is skewed to basic and acidic residues. The segment at 1–32 (MSYEPRGDHDKGYGGGGGHDGLPPRNRGRRPV) is disordered. WD repeat units follow at residues 94–133 (KIKH…FETI), 136–176 (AHDS…ESIR), 177–216 (GHTD…TDMT), 219–258 (GHGW…CLTT), 261–301 (GHKN…DIAL), 304–344 (GHEK…TAPD), and 376–415 (AHDF…EAPE). Positions 562–660 (KAGYQPPPPP…QSKGNYTRVR (99 aa)) are disordered. Pro residues predominate over residues 566–610 (QPPPPPGSAGAPMPPPGILPPGLIPPPGAAGFPMPPPGFAPPPLI).

The protein resides in the nucleus. Required for 3'-end cleavage and polyadenylation of pre-mRNAs. Also involved in chromosome segregation where it has a role in chromosome attachment to the mitotic spindle. The protein is Polyadenylation factor subunit 2 (paa-1) of Neurospora crassa (strain ATCC 24698 / 74-OR23-1A / CBS 708.71 / DSM 1257 / FGSC 987).